An 87-amino-acid chain; its full sequence is uncharacterized protein (87 aa).

This is an uncharacterized protein from Escherichia coli.